The chain runs to 180 residues: UPF0149 protein XCV3523 (180 aa).

Belongs to the UPF0149 family.

The protein is UPF0149 protein XCV3523 of Xanthomonas euvesicatoria pv. vesicatoria (strain 85-10) (Xanthomonas campestris pv. vesicatoria).